Here is a 256-residue protein sequence, read N- to C-terminus: MTRLLSAHRKVVADQGRLLEALESALGELVRSSPSRTDCSSLEAEQCAVGCFAMDPLVAAEGEVLLCLDPADLEQERFSYLLECLHGAFLRGVTIRCICAESMINLPGGRSYIQELQTAGAEIRVAPLLPFRLMLVDRIFACVSVVDRHGENSTLEIRSPETCHFVHRVFDYCWVTRTSSKACETADAIDVSDREVIILRLLANGMKDVAMARSLGISTRTLRRVITDLMGKLGVSSRFQLGARAAECRLLWSVLS.

The HTH luxR-type domain occupies 184 to 249 (ETADAIDVSD…QLGARAAECR (66 aa)). Positions 208 to 227 (DVAMARSLGISTRTLRRVIT) form a DNA-binding region, H-T-H motif.

In terms of biological role, involved in the regulation of the biosynthesis of phosphinothricin tripeptide (PTT), also known as bialaphos (BA), a natural-product antibiotic and potent herbicide. The sequence is that of Bialaphos biosynthetic pathway regulatory protein (brpA) from Streptomyces hygroscopicus.